We begin with the raw amino-acid sequence, 216 residues long: uncharacterized protein (216 aa).

4Fe-4S ferredoxin-type domains are found at residues 160-189 (DDKP…IDEK) and 188-216 (EKPK…ALLP). Positions 169, 172, 175, 179, 197, 200, 203, and 207 each coordinate [4Fe-4S] cluster.

It belongs to the FrhG family.

This is an uncharacterized protein from Methanocaldococcus jannaschii (strain ATCC 43067 / DSM 2661 / JAL-1 / JCM 10045 / NBRC 100440) (Methanococcus jannaschii).